Reading from the N-terminus, the 131-residue chain is Small ribosomal subunit protein uS8 (131 aa).

It belongs to the universal ribosomal protein uS8 family. As to quaternary structure, part of the 30S ribosomal subunit. Contacts proteins S5 and S12.

Its function is as follows. One of the primary rRNA binding proteins, it binds directly to 16S rRNA central domain where it helps coordinate assembly of the platform of the 30S subunit. This chain is Small ribosomal subunit protein uS8, found in Thiobacillus denitrificans (strain ATCC 25259 / T1).